The primary structure comprises 340 residues: Phospho-N-acetylmuramoyl-pentapeptide-transferase (340 aa).

The next 10 membrane-spanning stretches (helical) occupy residues 3-23, 53-73, 79-99, 119-139, 144-164, 176-196, 200-220, 227-247, 250-270, and 315-335; these read MSLI…PHFI, GGTV…FHVF, AYGA…IGFL, MALQ…PSGT, IGGL…FWIV, IDGL…IIAF, ELAI…FFVF, VFMG…ISIA, VEWT…SVML, and VDAF…WMVL.

It belongs to the glycosyltransferase 4 family. MraY subfamily. Requires Mg(2+) as cofactor.

It is found in the cell membrane. The enzyme catalyses UDP-N-acetyl-alpha-D-muramoyl-L-alanyl-gamma-D-glutamyl-L-lysyl-D-alanyl-D-alanine + di-trans,octa-cis-undecaprenyl phosphate = Mur2Ac(oyl-L-Ala-gamma-D-Glu-L-Lys-D-Ala-D-Ala)-di-trans,octa-cis-undecaprenyl diphosphate + UMP. It participates in cell wall biogenesis; peptidoglycan biosynthesis. In terms of biological role, catalyzes the initial step of the lipid cycle reactions in the biosynthesis of the cell wall peptidoglycan: transfers peptidoglycan precursor phospho-MurNAc-pentapeptide from UDP-MurNAc-pentapeptide onto the lipid carrier undecaprenyl phosphate, yielding undecaprenyl-pyrophosphoryl-MurNAc-pentapeptide, known as lipid I. The protein is Phospho-N-acetylmuramoyl-pentapeptide-transferase of Streptococcus thermophilus (strain CNRZ 1066).